The primary structure comprises 61 residues: Lens epithelial cell protein LEP503 (61 aa).

Restricted to lens epithelial cells.

May play a role in lens epithelial cell differentiation. In Homo sapiens (Human), this protein is Lens epithelial cell protein LEP503 (LENEP).